The following is a 230-amino-acid chain: Type II restriction enzyme NlaIII (230 aa).

The enzyme catalyses Endonucleolytic cleavage of DNA to give specific double-stranded fragments with terminal 5'-phosphates.. A P subtype restriction enzyme that recognizes the double-stranded sequence 5'-CATG-3' and cleaves after G-4. The chain is Type II restriction enzyme NlaIII (nlaIIIR) from Neisseria lactamica.